We begin with the raw amino-acid sequence, 205 residues long: Arginine exporter protein ArgO (205 aa).

6 helical membrane-spanning segments follow: residues 1–21 (MLAV…PLGP), 42–62 (LCAL…SALL), 67–87 (LLLA…GWGA), 111–131 (IIVT…DTFV), 147–167 (WFAF…ALLA), and 182–202 (VINL…ARQG).

Belongs to the LysE/ArgO transporter (TC 2.A.75) family.

The protein localises to the cell inner membrane. The enzyme catalyses L-arginine(in) = L-arginine(out). Involved in the export of arginine. Important to control the intracellular level of arginine and the correct balance between arginine and lysine. This Yersinia enterocolitica serotype O:8 / biotype 1B (strain NCTC 13174 / 8081) protein is Arginine exporter protein ArgO.